The sequence spans 238 residues: MSTDVAAADIPVPQVEVAADAAVDTPAAKPAKAPKAAKAKKSTPGPKKPRVTPAHPSYAEMVSEAIAALKERSGSSTIAIGKFIEDKHKAHLPANFRKILLTQIKKLVAAGKLTKVKGSYKLAKAPAAVKPKTATKKKPAAKPKAKAPAKKTAAKSPAKKAAAKPKAKAPAKAKAVAKPKAAAKPKAAAKPKAKAAAKKAPAAATPKKPAARKPPTKRATPVKKAAPAKKPAAKKAKK.

2 stretches are compositionally biased toward low complexity: residues 21–34 (AAVD…AKAP) and 123–132 (AKAPAAVKPK). Disordered stretches follow at residues 21–57 (AAVD…AHPS) and 123–238 (AKAP…KAKK). Positions 54–124 (AHPSYAEMVS…KVKGSYKLAK (71 aa)) constitute an H15 domain. The segment covering 133-197 (TATKKKPAAK…AAKPKAKAAA (65 aa)) has biased composition (basic residues). Low complexity-rich tracts occupy residues 198–208 (KKAPAAATPKK) and 217–230 (KRAT…PAKK).

Belongs to the histone H1/H5 family.

The protein resides in the nucleus. Its subcellular location is the chromosome. In terms of biological role, histones H1 are necessary for the condensation of nucleosome chains into higher-order structures. The chain is Histone H1 from Triticum aestivum (Wheat).